The following is a 158-amino-acid chain: uncharacterized protein (158 aa).

The protein resides in the mitochondrion. This is an uncharacterized protein from Arabidopsis thaliana (Mouse-ear cress).